The primary structure comprises 360 residues: Protein MGF 360-2L (360 aa).

The protein belongs to the asfivirus MGF 360 family.

Its function is as follows. Plays a role in virus cell tropism, and may be required for efficient virus replication in macrophages. The protein is Protein MGF 360-2L of Ornithodoros (relapsing fever ticks).